Here is a 324-residue protein sequence, read N- to C-terminus: Arginase (324 aa).

Histidine 115, aspartate 142, histidine 144, and aspartate 146 together coordinate Mn(2+). Substrate contacts are provided by residues 144–148 (HTDLH), 155–157 (SGN), and aspartate 196. Positions 244 and 246 each coordinate Mn(2+). Threonine 258 and glutamate 289 together coordinate substrate.

The protein belongs to the arginase family. In terms of assembly, homohexamer. Mn(2+) is required as a cofactor.

The enzyme catalyses L-arginine + H2O = urea + L-ornithine. It participates in nitrogen metabolism; urea cycle; L-ornithine and urea from L-arginine: step 1/1. This chain is Arginase (arcA), found in Agrobacterium fabrum (strain C58 / ATCC 33970) (Agrobacterium tumefaciens (strain C58)).